Here is a 254-residue protein sequence, read N- to C-terminus: DNA repair protein RecO (254 aa).

Belongs to the RecO family.

Its function is as follows. Involved in DNA repair and RecF pathway recombination. In Anaeromyxobacter dehalogenans (strain 2CP-C), this protein is DNA repair protein RecO.